The primary structure comprises 129 residues: Small ribosomal subunit protein uS8 (129 aa).

This sequence belongs to the universal ribosomal protein uS8 family. As to quaternary structure, part of the 30S ribosomal subunit.

One of the primary rRNA binding proteins, it binds directly to 16S rRNA central domain where it helps coordinate assembly of the platform of the 30S subunit. This chain is Small ribosomal subunit protein uS8, found in Nanoarchaeum equitans (strain Kin4-M).